Here is an 81-residue protein sequence, read N- to C-terminus: Cytotoxin 4 (81 aa).

The N-terminal stretch at 1–21 (MKTLLLTLVVVTIVCLDLGYT) is a signal peptide. 4 disulfides stabilise this stretch: C24–C42, C35–C59, C63–C74, and C75–C80.

The protein belongs to the three-finger toxin family. Short-chain subfamily. Type IA cytotoxin sub-subfamily. As to quaternary structure, monomer in solution; Homodimer and oligomer in the presence of negatively charged lipids forming a pore with a size ranging between 20 and 30 Angstroms. As to expression, expressed by the venom gland.

Its subcellular location is the secreted. It is found in the target cell membrane. In terms of biological role, basic protein that bind to cell membrane and depolarizes cardiomyocytes. This cytotoxin also shows lytic activities, but 2-fold more important than that of CTX-A2. It binds to the integrin alpha-V/beta-3 with a moderate affinity. Inhibits protein kinase C. It may interact with sulfatides in the cell membrane, which induces pore formation and cell internalization and is responsible for cytotoxicity in cardiomyocytes. It may also target the mitochondrial membrane and induces mitochondrial swelling and fragmentation. This is Cytotoxin 4 from Naja atra (Chinese cobra).